A 360-amino-acid chain; its full sequence is 3-isopropylmalate dehydrogenase (360 aa).

G76–E89 lines the NAD(+) pocket. Substrate is bound by residues R96, R106, R134, and D224. Residues D224, D248, and D252 each contribute to the Mg(2+) site. G282–N294 serves as a coordination point for NAD(+).

Belongs to the isocitrate and isopropylmalate dehydrogenases family. LeuB type 1 subfamily. Homodimer. Requires Mg(2+) as cofactor. It depends on Mn(2+) as a cofactor.

The protein resides in the cytoplasm. The enzyme catalyses (2R,3S)-3-isopropylmalate + NAD(+) = 4-methyl-2-oxopentanoate + CO2 + NADH. The protein operates within amino-acid biosynthesis; L-leucine biosynthesis; L-leucine from 3-methyl-2-oxobutanoate: step 3/4. In terms of biological role, catalyzes the oxidation of 3-carboxy-2-hydroxy-4-methylpentanoate (3-isopropylmalate) to 3-carboxy-4-methyl-2-oxopentanoate. The product decarboxylates to 4-methyl-2 oxopentanoate. This chain is 3-isopropylmalate dehydrogenase, found in Pseudomonas fluorescens (strain Pf0-1).